We begin with the raw amino-acid sequence, 62 residues long: Large ribosomal subunit protein bL28 (62 aa).

This sequence belongs to the bacterial ribosomal protein bL28 family.

The polypeptide is Large ribosomal subunit protein bL28 (Phytoplasma mali (strain AT)).